The primary structure comprises 285 residues: Bifunctional protein FolD (285 aa).

NADP(+)-binding positions include 165–167, Ser190, and Ile231; that span reads GRS.

The protein belongs to the tetrahydrofolate dehydrogenase/cyclohydrolase family. In terms of assembly, homodimer.

The catalysed reaction is (6R)-5,10-methylene-5,6,7,8-tetrahydrofolate + NADP(+) = (6R)-5,10-methenyltetrahydrofolate + NADPH. The enzyme catalyses (6R)-5,10-methenyltetrahydrofolate + H2O = (6R)-10-formyltetrahydrofolate + H(+). Its pathway is one-carbon metabolism; tetrahydrofolate interconversion. In terms of biological role, catalyzes the oxidation of 5,10-methylenetetrahydrofolate to 5,10-methenyltetrahydrofolate and then the hydrolysis of 5,10-methenyltetrahydrofolate to 10-formyltetrahydrofolate. In Alkaliphilus oremlandii (strain OhILAs) (Clostridium oremlandii (strain OhILAs)), this protein is Bifunctional protein FolD.